Reading from the N-terminus, the 246-residue chain is 1-(5-phosphoribosyl)-5-[(5-phosphoribosylamino)methylideneamino] imidazole-4-carboxamide isomerase (246 aa).

The active-site Proton acceptor is Asp-7. The active-site Proton donor is the Asp-130.

This sequence belongs to the HisA/HisF family.

Its subcellular location is the cytoplasm. It catalyses the reaction 1-(5-phospho-beta-D-ribosyl)-5-[(5-phospho-beta-D-ribosylamino)methylideneamino]imidazole-4-carboxamide = 5-[(5-phospho-1-deoxy-D-ribulos-1-ylimino)methylamino]-1-(5-phospho-beta-D-ribosyl)imidazole-4-carboxamide. It functions in the pathway amino-acid biosynthesis; L-histidine biosynthesis; L-histidine from 5-phospho-alpha-D-ribose 1-diphosphate: step 4/9. The protein is 1-(5-phosphoribosyl)-5-[(5-phosphoribosylamino)methylideneamino] imidazole-4-carboxamide isomerase of Blochmanniella pennsylvanica (strain BPEN).